Consider the following 426-residue polypeptide: DNA polymerase processivity factor component OPG148 (426 aa).

Belongs to the orthopoxvirus OPG148 family. Interacts with the DNA polymerase catalytic subunit OPG071. Interacts with UDG/OPG116. Component of the uracil-DNA glycosylase(UDG)-OPG148-polymerase complex; OPG148 and UDG form a heterodimeric processivity factor that associates with OPG071 to form the processive polymerase holoenzyme. Interacts with OPG117.

Its function is as follows. Plays an essential role in viral DNA replication by acting as the polymerase processivity factor together with protein OPG116. Serves as a bridge which links the DNA polymerase OPG071 and the uracil DNA glycosylase. In Cynomys gunnisoni (Gunnison's prairie dog), this protein is DNA polymerase processivity factor component OPG148 (OPG148).